The chain runs to 137 residues: Flagellar basal body rod protein FlgB (137 aa).

This sequence belongs to the flagella basal body rod proteins family. As to quaternary structure, the basal body constitutes a major portion of the flagellar organelle and consists of a number of rings mounted on a central rod. In Gram-negative bacteria, at least four rings, L, P, S and M are present, whereas Gram-positive bacteria lack the L and P rings. The rod consists of about 26 subunits of FlgG in the distal portion, and FlgB, FlgC and FlgF build up the proximal portion of the rod with about 6 subunits each. Rod assembly occurs by export via the flagellum-specific pathway of its constituent proteins and by their incorporation into the rod structure in the probable order of FlgB, FlgC, FlgF and FlgG. Another protein, FliE, also assembles onto the stable rod structure.

It is found in the bacterial flagellum basal body. Its function is as follows. Structural component of flagellum, the bacterial motility apparatus. Part of the rod structure of flagellar basal body. This Yersinia ruckeri protein is Flagellar basal body rod protein FlgB.